An 82-amino-acid chain; its full sequence is Putative membrane protein insertion efficiency factor (82 aa).

This sequence belongs to the UPF0161 family.

It is found in the cell inner membrane. In terms of biological role, could be involved in insertion of integral membrane proteins into the membrane. The protein is Putative membrane protein insertion efficiency factor of Rickettsia africae (strain ESF-5).